Reading from the N-terminus, the 353-residue chain is 2-oxoglutarate-dependent dioxygenase phqC (353 aa).

Residues 199–315 enclose the Fe2OG dioxygenase domain; that stretch reads CASELRLNNY…RRSCAFFLKA (117 aa). Histidine 227, aspartate 229, and histidine 287 together coordinate Fe cation. Arginine 302 provides a ligand contact to 2-oxoglutarate.

This sequence belongs to the iron/ascorbate-dependent oxidoreductase family. Fe(2+) is required as a cofactor.

It participates in alkaloid biosynthesis. In terms of biological role, 2-oxoglutarate-dependent dioxygenase; part of the gene cluster that mediates the biosynthesis of paraherquamide, a fungal indole alkaloid that belongs to a family of natural products containing a characteristic bicyclo[2.2.2]diazaoctane core. The first steps in the biosynthesis of paraherquamide is the production of the beta-methyl-proline precursor from L-isoleucine. They require oxidation of a terminally hydroxylated L-isoleucine to the corresponding aldehyde by enzymes which have still to be identified. Spontaneous cyclization and dehydration would yield the 4-methyl pyrolline-5-carboxylic acid, which is then reduced by the pyrroline-5-carboxylate reductase phqD leading to the beta-methyl-proline precursor. The next step of paraherquamide biosynthesis involves coupling of beta-methyl-proline and L-tryptophan by the bimodular NRPS phqB, to produce a monooxopiperazine intermediate. The reductase (R) domain of phqB utilizes NADPH for hydride transfer to reduce the thioester bond of the T domain-tethered linear dipeptide to a hemithioaminal intermediate, which spontaneously cleaves the C-S bond to release the aldehyde product. This compound undergoes spontaneous cyclization and dehydration to give a dienamine which is reverse prenylated at C-2 by the reverse prenyltransferase phqJ. The other prenyltransferase present in the cluster, phqI may be a redundant gene in the pathway. During biosynthetic assembly, the key step to produce the polycyclic core is catalyzed by the bifunctional reductase and intramolecular [4+2] Diels-Alderase, phqE, resulting in formation of the [2.2.2] diazaoctane intermediate preparaherquamide. Following formation of preparaherquamide, an indole 2,3-epoxidation-initiated pinacol-like rearrangement is catalyzed by the phqK FAD-dependent monooxygenase. The prenyltransferase phqA, the cytochrome P450 monooxygenase phqL, and the FAD-linked oxidoreductase phqH (or the cytochrome P450 monooxygenase phqM), are proposed to be involved in the formation of the pyran ring. The FAD-dependent monooxygenase phqK is likely responsible for generation of the spiro-oxindole, and the N-methylation is likely mediated by the phqN methyltransferase leading to the isolable natural product paraherquamide F. However, the order of these biosynthetic steps has still to be determined. In late-stage paraherquamide biosynthesis, the third P450 monooxygenase, phqO, is probably responsible for the C-14 hydroxylation, transforming paraherquamide F to paraherquamide G, and paraherquamide E to the final product paraherquamide A. The expansion from the 6-membered ring pyran (in paraherquamides F and G) to the 7-membered dioxepin ring (in paraherquamides A and E) represents a poorly understood but intriguing process that probably involves the 2-oxoglutarate-dependent dioxygenase phqC. Finally, the remaining members of the paraherquamide cluster, including phqI as well as phqM (or phqH), do not have a clearly prescribed role and appear to be redundant. This Penicillium fellutanum protein is 2-oxoglutarate-dependent dioxygenase phqC.